The primary structure comprises 363 residues: UDP-3-O-acylglucosamine N-acyltransferase (363 aa).

The active-site Proton acceptor is His-237. The tract at residues 338–363 (EQNSTDRAPNAKMLEVGVDPETTCSS) is disordered.

It belongs to the transferase hexapeptide repeat family. LpxD subfamily. As to quaternary structure, homotrimer.

The catalysed reaction is a UDP-3-O-[(3R)-3-hydroxyacyl]-alpha-D-glucosamine + a (3R)-hydroxyacyl-[ACP] = a UDP-2-N,3-O-bis[(3R)-3-hydroxyacyl]-alpha-D-glucosamine + holo-[ACP] + H(+). The protein operates within bacterial outer membrane biogenesis; LPS lipid A biosynthesis. Catalyzes the N-acylation of UDP-3-O-acylglucosamine using 3-hydroxyacyl-ACP as the acyl donor. Is involved in the biosynthesis of lipid A, a phosphorylated glycolipid that anchors the lipopolysaccharide to the outer membrane of the cell. The protein is UDP-3-O-acylglucosamine N-acyltransferase of Synechococcus sp. (strain JA-2-3B'a(2-13)) (Cyanobacteria bacterium Yellowstone B-Prime).